Consider the following 92-residue polypeptide: Small ribosomal subunit protein uS19c (92 aa).

It belongs to the universal ribosomal protein uS19 family.

The protein localises to the plastid. Its subcellular location is the chloroplast. Protein S19 forms a complex with S13 that binds strongly to the 16S ribosomal RNA. In Piper cenocladum (Ant piper), this protein is Small ribosomal subunit protein uS19c.